Consider the following 231-residue polypeptide: Transcriptional regulator NRG1 (231 aa).

Residue serine 163 is modified to Phosphoserine. C2H2-type zinc fingers lie at residues 174 to 196 and 202 to 226; these read YICKICARGFTTSGHLARHNRIH and HCCPYKGCTQRFSRHDNCLQHYRTH.

It localises to the nucleus. Transcriptional repressor involved in regulation of glucose repression. Binds to UAS-1 in the STA1 promoter. This is Transcriptional regulator NRG1 (NRG1) from Saccharomyces cerevisiae (strain ATCC 204508 / S288c) (Baker's yeast).